The primary structure comprises 91 residues: C-C motif chemokine 5 (91 aa).

The N-terminal stretch at 1–23 (MKVSATAFAVLLMAAALCAPASA) is a signal peptide. Cystine bridges form between cysteine 33/cysteine 57 and cysteine 34/cysteine 73.

It belongs to the intercrine beta (chemokine CC) family.

It localises to the secreted. Chemoattractant for blood monocytes, memory T-helper cells and eosinophils. Causes the release of histamine from basophils and activates eosinophils. May activate several chemokine receptors including CCR1, CCR3, CCR4 and CCR5. May also be an agonist of the G protein-coupled receptor GPR75. Together with GPR75, may play a role in neuron survival through activation of a downstream signaling pathway involving the PI3, Akt and MAP kinases. By activating GPR75 may also play a role in insulin secretion by islet cells. The protein is C-C motif chemokine 5 (CCL5) of Bos taurus (Bovine).